Here is a 292-residue protein sequence, read N- to C-terminus: Homoserine kinase (292 aa).

Residue 84–94 participates in ATP binding; the sequence is PLSRGLGSSSA.

This sequence belongs to the GHMP kinase family. Homoserine kinase subfamily.

Its subcellular location is the cytoplasm. The enzyme catalyses L-homoserine + ATP = O-phospho-L-homoserine + ADP + H(+). It functions in the pathway amino-acid biosynthesis; L-threonine biosynthesis; L-threonine from L-aspartate: step 4/5. Catalyzes the ATP-dependent phosphorylation of L-homoserine to L-homoserine phosphate. This chain is Homoserine kinase, found in Campylobacter jejuni subsp. doylei (strain ATCC BAA-1458 / RM4099 / 269.97).